An 842-amino-acid chain; its full sequence is Leucine--tRNA ligase (842 aa).

The 'HIGH' region motif lies at proline 62–histidine 72. The interval glycine 390–aspartate 414 is disordered. A 'KMSKS' region motif is present at residues alanine 607 to serine 611. Lysine 610 contacts ATP.

It belongs to the class-I aminoacyl-tRNA synthetase family.

The protein resides in the cytoplasm. The enzyme catalyses tRNA(Leu) + L-leucine + ATP = L-leucyl-tRNA(Leu) + AMP + diphosphate. The protein is Leucine--tRNA ligase of Paenarthrobacter aurescens (strain TC1).